An 88-amino-acid polypeptide reads, in one-letter code: Small ribosomal subunit protein bS16c (88 aa).

This sequence belongs to the bacterial ribosomal protein bS16 family.

It localises to the plastid. The protein localises to the chloroplast. The protein is Small ribosomal subunit protein bS16c of Lactuca sativa (Garden lettuce).